A 485-amino-acid polypeptide reads, in one-letter code: Probable cobyric acid synthase (485 aa).

Residues 250–435 (EIEIAVIRLP…LHGLFDNKNI (186 aa)) enclose the GATase cobBQ-type domain. Catalysis depends on C328, which acts as the Nucleophile. H427 is a catalytic residue.

This sequence belongs to the CobB/CobQ family. CobQ subfamily.

It functions in the pathway cofactor biosynthesis; adenosylcobalamin biosynthesis. Functionally, catalyzes amidations at positions B, D, E, and G on adenosylcobyrinic A,C-diamide. NH(2) groups are provided by glutamine, and one molecule of ATP is hydrogenolyzed for each amidation. The protein is Probable cobyric acid synthase of Methanosarcina barkeri (strain Fusaro / DSM 804).